A 316-amino-acid chain; its full sequence is Low affinity immunoglobulin gamma Fc region receptor II-a (316 aa).

The first 35 residues, 1–35, serve as a signal peptide directing secretion; sequence MAMETQMSQNVCPRNLWLLQPLTVLLLLASADSQA. Over 36–216 the chain is Extracellular; it reads APPKAVLKLE…PSVGSSSPVG (181 aa). 2 Ig-like C2-type domains span residues 38 to 117 and 121 to 203; these read PKAV…VHLT and EWLV…VTIT. Disulfide bonds link C61/C103 and C142/C186. Residues N96, N170, and N177 are each glycosylated (N-linked (GlcNAc...) asparagine). The chain crosses the membrane as a helical span at residues 217-239; the sequence is IIVAVVIATAVAAIVAAVVALIY. At 240–316 the chain is on the cytoplasmic side; the sequence is CRKKRISANS…PPNDHVNSNN (77 aa). Phosphotyrosine; by SRC-type Tyr-kinases is present on residues Y287 and Y303.

In terms of assembly, interacts with INPP5D/SHIP1 and INPPL1/SHIP2, regulating its function. Interacts with APCS and FGR. Interacts with HCK. Post-translationally, phosphorylated by SRC-type Tyr-kinases such as HCK, LYN, BLK, FYN and SYK.

Its subcellular location is the cell membrane. Binds to the Fc region of immunoglobulins gamma. Low affinity receptor. By binding to IgG it initiates cellular responses against pathogens and soluble antigens. Promotes phagocytosis of opsonized antigens. This is Low affinity immunoglobulin gamma Fc region receptor II-a (FCGR2A) from Pan troglodytes (Chimpanzee).